We begin with the raw amino-acid sequence, 340 residues long: GTP 3',8-cyclase (340 aa).

In terms of domain architecture, Radical SAM core spans 20-246 (RFERQYVYLR…PKALSDGPAK (227 aa)). Position 29 (R29) interacts with GTP. [4Fe-4S] cluster-binding residues include C36 and C40. An S-adenosyl-L-methionine-binding site is contributed by Y42. Residue C43 participates in [4Fe-4S] cluster binding. R79 is a binding site for GTP. Position 83 (G83) interacts with S-adenosyl-L-methionine. T110 contributes to the GTP binding site. S134 contacts S-adenosyl-L-methionine. Residue K171 participates in GTP binding. S-adenosyl-L-methionine is bound at residue M205. Residues C268 and C271 each contribute to the [4Fe-4S] cluster site. Residue 273–275 (RLR) coordinates GTP. C285 lines the [4Fe-4S] cluster pocket.

The protein belongs to the radical SAM superfamily. MoaA family. In terms of assembly, monomer and homodimer. [4Fe-4S] cluster serves as cofactor.

The catalysed reaction is GTP + AH2 + S-adenosyl-L-methionine = (8S)-3',8-cyclo-7,8-dihydroguanosine 5'-triphosphate + 5'-deoxyadenosine + L-methionine + A + H(+). It functions in the pathway cofactor biosynthesis; molybdopterin biosynthesis. Catalyzes the cyclization of GTP to (8S)-3',8-cyclo-7,8-dihydroguanosine 5'-triphosphate. The chain is GTP 3',8-cyclase from Actinobacillus pleuropneumoniae serotype 7 (strain AP76).